Consider the following 247-residue polypeptide: GTP cyclohydrolase 1 type 2 homolog (247 aa).

5 residues coordinate a divalent metal cation: His-63, His-64, Asp-101, His-215, and Glu-219.

Belongs to the GTP cyclohydrolase I type 2/NIF3 family. As to quaternary structure, homohexamer.

In Yersinia pestis, this protein is GTP cyclohydrolase 1 type 2 homolog.